A 399-amino-acid polypeptide reads, in one-letter code: Methylthioribose kinase (399 aa).

ATP is bound by residues asparagine 40, lysine 57, and 111 to 113 (EDL). A substrate-binding site is contributed by aspartate 229. 246–248 (DAE) is an ATP binding site. A substrate-binding site is contributed by arginine 344.

Belongs to the methylthioribose kinase family. In terms of assembly, homodimer.

The enzyme catalyses 5-(methylsulfanyl)-D-ribose + ATP = 5-(methylsulfanyl)-alpha-D-ribose 1-phosphate + ADP + H(+). It functions in the pathway amino-acid biosynthesis; L-methionine biosynthesis via salvage pathway; S-methyl-5-thio-alpha-D-ribose 1-phosphate from S-methyl-5'-thioadenosine (hydrolase route): step 2/2. Functionally, catalyzes the phosphorylation of methylthioribose into methylthioribose-1-phosphate. The chain is Methylthioribose kinase from Klebsiella pneumoniae subsp. pneumoniae (strain ATCC 700721 / MGH 78578).